A 920-amino-acid polypeptide reads, in one-letter code: Valine--tRNA ligase (920 aa).

The short motif at 40–50 is the 'HIGH' region element; it reads PNVTGTLHMGH. The short motif at 522 to 526 is the 'KMSKS' region element; that stretch reads KMSKS. K525 contributes to the ATP binding site. Coiled-coil stretches lie at residues 642–668 and 849–920; these read EWIR…DLLA and AGVI…IESL.

The protein belongs to the class-I aminoacyl-tRNA synthetase family. ValS type 1 subfamily. Monomer.

It localises to the cytoplasm. The catalysed reaction is tRNA(Val) + L-valine + ATP = L-valyl-tRNA(Val) + AMP + diphosphate. Catalyzes the attachment of valine to tRNA(Val). As ValRS can inadvertently accommodate and process structurally similar amino acids such as threonine, to avoid such errors, it has a 'posttransfer' editing activity that hydrolyzes mischarged Thr-tRNA(Val) in a tRNA-dependent manner. This is Valine--tRNA ligase from Coxiella burnetii (strain RSA 493 / Nine Mile phase I).